The sequence spans 251 residues: Low molecular mass lipoprotein PBMHPC-21 (251 aa).

The first 16 residues, 1 to 16 (MKFVVVFASCVLAVSA), serve as a signal peptide directing secretion.

It belongs to the 30 kDa lipoprotein family.

The protein resides in the secreted. This Bombyx mori (Silk moth) protein is Low molecular mass lipoprotein PBMHPC-21.